A 473-amino-acid chain; its full sequence is Glutamyl-tRNA reductase (473 aa).

Residues 49-52, Ser109, 114-116, and Gln120 contribute to the substrate site; these read TCNR and EQQ. The active-site Nucleophile is the Cys50. 189–194 serves as a coordination point for NADP(+); it reads GAGSMG. A disordered region spans residues 445–473; the sequence is SGLDAGSGPQGADGPSAGPTPSAPNPSAE.

The protein belongs to the glutamyl-tRNA reductase family. In terms of assembly, homodimer.

The enzyme catalyses (S)-4-amino-5-oxopentanoate + tRNA(Glu) + NADP(+) = L-glutamyl-tRNA(Glu) + NADPH + H(+). It functions in the pathway porphyrin-containing compound metabolism; protoporphyrin-IX biosynthesis; 5-aminolevulinate from L-glutamyl-tRNA(Glu): step 1/2. Its function is as follows. Catalyzes the NADPH-dependent reduction of glutamyl-tRNA(Glu) to glutamate 1-semialdehyde (GSA). This chain is Glutamyl-tRNA reductase, found in Mycobacterium ulcerans (strain Agy99).